The primary structure comprises 469 residues: UTP--glucose-1-phosphate uridylyltransferase 2 (469 aa).

Residue Ala2 is modified to N-acetylalanine. UTP-binding positions include Leu85–Gly88, Lys99, Gln162, and Gly191. Gly87 to Gly88 is a substrate binding site. Substrate-binding positions include His192 and Asn220–Asp222. Positions 222 and 360 each coordinate UTP.

Belongs to the UDPGP type 1 family. In terms of tissue distribution, expressed in cauline leaves, flowers and siliques.

Its subcellular location is the cytoplasm. It carries out the reaction alpha-D-glucose 1-phosphate + UTP + H(+) = UDP-alpha-D-glucose + diphosphate. Functionally, converts glucose 1-phosphate to UDP-glucose, which is the major glycosyl donor for polysaccharides. Acts redundantly with UGP1 and is essential for the synthesis of sucrose, starch and cell wall, and callose deposition. This is UTP--glucose-1-phosphate uridylyltransferase 2 from Arabidopsis thaliana (Mouse-ear cress).